A 355-amino-acid chain; its full sequence is Carbohydrate sulfotransferase 10 (355 aa).

The Cytoplasmic segment spans residues 1–6; sequence MHHRWL. The helical; Signal-anchor for type II membrane protein transmembrane segment at 7–27 threads the bilayer; that stretch reads LLVACFWVLFMLMVASKLITL. Topologically, residues 28–355 are lumenal; that stretch reads TMKDPEGYGN…FGYKEPTFLF (328 aa). Residues asparagine 93 and asparagine 98 are each glycosylated (N-linked (GlcNAc...) asparagine). Residues 126-132 and 188-196 contribute to the 3'-phosphoadenylyl sulfate site; these read PKVGNTQ and RDPFERLIS. An N-linked (GlcNAc...) asparagine glycan is attached at asparagine 316.

This sequence belongs to the sulfotransferase 2 family.

The protein localises to the golgi apparatus membrane. Functionally, catalyzes the transfer of sulfate to position 3 of terminal glucuronic acid of both protein- and lipid-linked oligosaccharides. Participates in biosynthesis of HNK-1 carbohydrate structure, a sulfated glucuronyl-lactosaminyl residue carried by many neural recognition molecules. The polypeptide is Carbohydrate sulfotransferase 10 (chst10) (Xenopus laevis (African clawed frog)).